The sequence spans 723 residues: ABC transporter F family member 4 (723 aa).

The disordered stretch occupies residues 1 to 117; sequence MGKKKSDESA…KEQKKREAKE (117 aa). Positions 18–31 are enriched in basic and acidic residues; sequence SGKDASKDSKKEKL. Residues 50–65 are compositionally biased toward polar residues; sequence GSSSRTKAAPKSTSYT. Residues 72–84 show a composition bias toward acidic residues; the sequence is PSDEEDDGESDEE. The span at 95–117 shows a compositional bias: basic and acidic residues; sequence KSEQRHLEISVTDKEQKKREAKE. Residues 163–423 form the ABC transporter 1 domain; it reads ITIESFSVSA…EMNKKFDVYD (261 aa). Residue 195 to 202 coordinates ATP; it reads GPNGMGKS. Disordered stretches follow at residues 256–275 and 427–472; these read LQKS…DDDD and KAAK…APEA. Acidic residues predominate over residues 266-275; it reads ENVDGEDDDD. A compositionally biased stretch (basic and acidic residues) spans 437–446; the sequence is QQEKVKDRAK. The ABC transporter 2 domain occupies 496–721; the sequence is LQLIEVSFSY…DLQREIKAEV (226 aa). Residue 530–537 participates in ATP binding; that stretch reads GPNGAGKS.

It belongs to the ABC transporter superfamily. ABCF family. EF3 (TC 3.A.1.121) subfamily.

The chain is ABC transporter F family member 4 (ABCF4) from Arabidopsis thaliana (Mouse-ear cress).